Here is a 448-residue protein sequence, read N- to C-terminus: Trigger factor (448 aa).

Residues Gly-172–Pro-257 form the PPIase FKBP-type domain.

Belongs to the FKBP-type PPIase family. Tig subfamily.

Its subcellular location is the cytoplasm. The catalysed reaction is [protein]-peptidylproline (omega=180) = [protein]-peptidylproline (omega=0). Involved in protein export. Acts as a chaperone by maintaining the newly synthesized protein in an open conformation. Functions as a peptidyl-prolyl cis-trans isomerase. The polypeptide is Trigger factor (Burkholderia vietnamiensis (strain G4 / LMG 22486) (Burkholderia cepacia (strain R1808))).